Consider the following 94-residue polypeptide: NADH-ubiquinone oxidoreductase 10.5 kDa subunit (94 aa).

The protein belongs to the complex I NDUFA2 subunit family. Complex I is composed of about 40 different subunits.

Its subcellular location is the mitochondrion inner membrane. Its function is as follows. Accessory subunit of the mitochondrial membrane respiratory chain NADH dehydrogenase (Complex I), that is believed not to be involved in catalysis. Complex I functions in the transfer of electrons from NADH to the respiratory chain. The immediate electron acceptor for the enzyme is believed to be ubiquinone. The protein is NADH-ubiquinone oxidoreductase 10.5 kDa subunit (nuo-10.5) of Neurospora crassa (strain ATCC 24698 / 74-OR23-1A / CBS 708.71 / DSM 1257 / FGSC 987).